The chain runs to 572 residues: Mitochondrial distribution and morphology protein 34 (572 aa).

An SMP-LTD domain is found at 1-195 (MAFNFNWSPL…LPAIIHRLSL (195 aa)). 3 disordered regions span residues 210–239 (TQAE…VDAL), 330–423 (SASI…PLSP), and 455–482 (RDMG…TPRA). Residues 330–347 (SASIASMQTRSSTPSHTF) are compositionally biased toward polar residues. Residues 358–370 (RHSKAHSRKRKKR) are compositionally biased toward basic residues. Residues 371–381 (VVDLRRPKTTD) are compositionally biased toward basic and acidic residues. Composition is skewed to polar residues over residues 387 to 400 (SDES…SAPS) and 460 to 480 (PSST…SATP).

Belongs to the MDM34 family. Component of the ER-mitochondria encounter structure (ERMES) or MDM complex, composed of mmm1, mdm10, mdm12 and mdm34.

The protein resides in the mitochondrion outer membrane. Its function is as follows. Component of the ERMES/MDM complex, which serves as a molecular tether to connect the endoplasmic reticulum (ER) and mitochondria. Components of this complex are involved in the control of mitochondrial shape and protein biogenesis, and function in nonvesicular lipid trafficking between the ER and mitochondria. Mdm34 is required for the interaction of the ER-resident membrane protein mmm1 and the outer mitochondrial membrane-resident beta-barrel protein mdm10. This is Mitochondrial distribution and morphology protein 34 from Aspergillus clavatus (strain ATCC 1007 / CBS 513.65 / DSM 816 / NCTC 3887 / NRRL 1 / QM 1276 / 107).